We begin with the raw amino-acid sequence, 301 residues long: uncharacterized protein (301 aa).

3 residues coordinate a divalent metal cation: E146, E148, and D177.

The protein belongs to the FAH family.

This is an uncharacterized protein from Staphylococcus epidermidis (strain ATCC 12228 / FDA PCI 1200).